Here is a 303-residue protein sequence, read N- to C-terminus: MASLQDIRRRIDSTKKTSQITSAMQMVSSSKLIQIQKHTSGYLDYANHVEAIVAHLAAAHLLEHQNGSSIPFITQRPVKTTAILVITSDRGLVGGYNNQVLKRTDQIMREQKLTKENAVIFALGGKGSDYYAKRGFTIAFENRDITDVPKFWEVSDLVKEVTKQYAARKFDALELVFNHFINRLKNDVVNQQILPIRSENFQRDEKGNLTADKYKGQSSIYEFEPAPESLLKIVLPQFAQSLLYGAILDAKTAEHAASASAMRAATDNAKDLISTLELKYNRARQAAITTEITEITGGMAALQ.

The protein belongs to the ATPase gamma chain family. As to quaternary structure, F-type ATPases have 2 components, CF(1) - the catalytic core - and CF(0) - the membrane proton channel. CF(1) has five subunits: alpha(3), beta(3), gamma(1), delta(1), epsilon(1). CF(0) has three main subunits: a, b and c.

Its subcellular location is the cell membrane. Its function is as follows. Produces ATP from ADP in the presence of a proton gradient across the membrane. The gamma chain is believed to be important in regulating ATPase activity and the flow of protons through the CF(0) complex. The chain is ATP synthase gamma chain from Oenococcus oeni (strain ATCC BAA-331 / PSU-1).